Here is a 416-residue protein sequence, read N- to C-terminus: Serine hydroxymethyltransferase (416 aa).

Residues Leu118 and 122-124 each bind (6S)-5,6,7,8-tetrahydrofolate; that span reads GHL. The residue at position 226 (Lys226) is an N6-(pyridoxal phosphate)lysine. Residues Glu242 and 350 to 352 each bind (6S)-5,6,7,8-tetrahydrofolate; that span reads SPF.

It belongs to the SHMT family. As to quaternary structure, homodimer. Pyridoxal 5'-phosphate serves as cofactor.

Its subcellular location is the cytoplasm. It catalyses the reaction (6R)-5,10-methylene-5,6,7,8-tetrahydrofolate + glycine + H2O = (6S)-5,6,7,8-tetrahydrofolate + L-serine. It functions in the pathway one-carbon metabolism; tetrahydrofolate interconversion. Its pathway is amino-acid biosynthesis; glycine biosynthesis; glycine from L-serine: step 1/1. Catalyzes the reversible interconversion of serine and glycine with tetrahydrofolate (THF) serving as the one-carbon carrier. This reaction serves as the major source of one-carbon groups required for the biosynthesis of purines, thymidylate, methionine, and other important biomolecules. Also exhibits THF-independent aldolase activity toward beta-hydroxyamino acids, producing glycine and aldehydes, via a retro-aldol mechanism. This is Serine hydroxymethyltransferase from Helicobacter pylori (strain ATCC 700392 / 26695) (Campylobacter pylori).